Consider the following 423-residue polypeptide: MKAIIISIGDELLKGHRVNTNAPFIARELGNIGIPVTRIITCSDDPQAIRDSVTLALTEAEAVFVTGGLGPTNDDRTRDAVRALLGRGLALDEPSFERIADYFRRRNRPVTEVMKDQAMVIEGSIAIPNTKGTAPGMIIECAPRFAGRHLVLMPGVPAEMEAMMRLTVVPFFAPLSGAFIRHTPVMTMGIGETQLADMIVEVEDSLPSGTTLAYLPHAAGVSLMVSTSGARREDVDAENRRVVEAIVAKAGRFVYATSEVTLEEVVVNLLLERKLTVAVAESCTGGLLGSRLTDVPGSSGCFLEGLVTYSNQAKVRLLGVDPATIEAHGAVSEPVAKEMARGCLERSGADISVSTTGIAGPGGGTPEKPVGTVCVGIASKLPDGAVRVEAARFVMHGDRHQNKIRFSEAALRGLLVRLKEMEF.

It belongs to the CinA family.

In Chlorobaculum tepidum (strain ATCC 49652 / DSM 12025 / NBRC 103806 / TLS) (Chlorobium tepidum), this protein is CinA-like protein.